Consider the following 499-residue polypeptide: Ribose import ATP-binding protein RbsA (499 aa).

2 ABC transporter domains span residues 3 to 240 and 250 to 494; these read VEMT…VGRA and LTPG…TGGD. 35–42 is a binding site for ATP; that stretch reads GENGAGKS.

It belongs to the ABC transporter superfamily. Ribose importer (TC 3.A.1.2.1) family. As to quaternary structure, the complex is composed of an ATP-binding protein (RbsA), two transmembrane proteins (RbsC) and a solute-binding protein (RbsB).

Its subcellular location is the cell membrane. The enzyme catalyses D-ribose(out) + ATP + H2O = D-ribose(in) + ADP + phosphate + H(+). Functionally, part of the ABC transporter complex RbsABC involved in ribose import. Responsible for energy coupling to the transport system. This Halalkalibacterium halodurans (strain ATCC BAA-125 / DSM 18197 / FERM 7344 / JCM 9153 / C-125) (Bacillus halodurans) protein is Ribose import ATP-binding protein RbsA.